Reading from the N-terminus, the 320-residue chain is ATPase H(+)-transporting accessory protein 2 (320 aa).

An N-terminal signal peptide occupies residues 1 to 17 (MLRVFVIFSLFIAAINA). The Lumenal portion of the chain corresponds to 18-277 (SGEFTVLNRP…YGSDYPVIFN (260 aa)). The helical transmembrane segment at 278 to 298 (IILWFMVVFGLSLLAICYAIA) threads the bilayer. Residues 299-320 (AMDPGRDSIIYRMTSTRIKKDN) lie on the Cytoplasmic side of the membrane. The Mediates retrograde transport to the ER motif lies at 317–320 (KKDN).

Interacts with fz and fz2. Interacts (via N-terminus) with stan. As an accessory component of the multisubunit proton-transporting vacuolar (V)-ATPase protein pump, might interacts with VhaAC45. Proteolytically cleaved by a furin-like convertase in the trans-Golgi network to generate N- and C-terminal fragments. Cleavage is reduced in the fat body.

The protein localises to the cell membrane. It localises to the endoplasmic reticulum membrane. Its subcellular location is the vesicle. It is found in the apical cell membrane. The protein resides in the golgi apparatus membrane. The protein localises to the secreted. Multifunctional protein which functions as a transmembrane receptor in the planar cell polarity (PCP) and is involved in the assembly of the proton-transporting vacuolar (V)-ATPase protein pump. As transmembrane receptor mediates fz/PCP signaling through interaction with fz and stabilizes asymmetric PCP domains through its interaction with stan. Also mediates Wnt/beta-cat signaling through interaction with fz/fz2. Probably by controlling the assembly of the V-ATPase pump and thus the acidification of the endo-lysosomal system, plays a role in many neuronal processes including synapse morphology and synaptic transmission. Functionally, stabilizes asymmetric Planar Cell Polarity (PCP) domains through its interaction with stan. In Drosophila melanogaster (Fruit fly), this protein is ATPase H(+)-transporting accessory protein 2.